Reading from the N-terminus, the 426-residue chain is Enolase (426 aa).

Glutamine 165 serves as a coordination point for (2R)-2-phosphoglycerate. Glutamate 207 (proton donor) is an active-site residue. Mg(2+)-binding residues include aspartate 244, glutamate 285, and aspartate 312. Residues lysine 337, arginine 366, serine 367, and lysine 388 each contribute to the (2R)-2-phosphoglycerate site. The active-site Proton acceptor is lysine 337.

It belongs to the enolase family. The cofactor is Mg(2+).

Its subcellular location is the cytoplasm. The protein localises to the secreted. It localises to the cell surface. The enzyme catalyses (2R)-2-phosphoglycerate = phosphoenolpyruvate + H2O. It participates in carbohydrate degradation; glycolysis; pyruvate from D-glyceraldehyde 3-phosphate: step 4/5. In terms of biological role, catalyzes the reversible conversion of 2-phosphoglycerate (2-PG) into phosphoenolpyruvate (PEP). It is essential for the degradation of carbohydrates via glycolysis. The polypeptide is Enolase (Thermosynechococcus vestitus (strain NIES-2133 / IAM M-273 / BP-1)).